The sequence spans 255 residues: Alpha-acetolactate decarboxylase (255 aa).

This sequence belongs to the alpha-acetolactate decarboxylase family.

The enzyme catalyses (2S)-2-acetolactate + H(+) = (R)-acetoin + CO2. The protein operates within polyol metabolism; (R,R)-butane-2,3-diol biosynthesis; (R,R)-butane-2,3-diol from pyruvate: step 2/3. Its function is as follows. Converts acetolactate into acetoin, which can be excreted by the cells. This may be a mechanism for controlling the internal pH of cells in the stationary stage. The sequence is that of Alpha-acetolactate decarboxylase (alsD) from Bacillus subtilis (strain 168).